Consider the following 123-residue polypeptide: Intracellular iron chaperone frataxin (123 aa).

In terms of assembly, homodimer, upon Fe(2+) binding. Interacts with the SufS/SufU complex. Interacts with CpfC. Fe(2+) serves as cofactor.

The protein localises to the cytoplasm. In terms of biological role, plays an essential role in iron intracellular trafficking to iron cofactor biogenesis systems including iron-sulfur cluster (Fe-S) or heme assembly. Promotes the biosynthesis of iron-sulfur clusters by delivering Fe to the complex composed of the cysteine desulfurase SufS and the zinc-dependent sulfurtransferase SufU. Also plays a critical role in coproporphyrin-dependent heme b biogenesis and thus provides an essential function for the bacterial global metabolism. The protein is Intracellular iron chaperone frataxin (fra) of Bacillus subtilis (strain 168).